The following is a 504-amino-acid chain: Kinesin light chain 3 (504 aa).

A coiled-coil region spans residues 90 to 150 (ALSAHVGALE…EEEKRHLEFL (61 aa)). The tract at residues 153 to 197 (LRQYDPPAESQQSESPPRRDSLASLFPSEEEERKGPEAAGAAAAQ) is disordered. Low complexity predominate over residues 158–167 (PPAESQQSES). At S173 the chain carries Phosphoserine. TPR repeat units follow at residues 207–240 (LRTL…LERS), 249–282 (ATML…REQT), 291–324 (AATL…REKV), 333–366 (AKQL…YEAL), and 375–408 (AKTK…EDLP). The tract at residues 411 to 438 (LGAPNTGTAGDAEQALRRSSSLSKIRES) is disordered. Phosphoserine is present on S466. The tract at residues 472 to 504 (VDAPRAPGTQFPSWHLDKAPRTLSASTQDLSPH) is disordered. Over residues 494 to 504 (LSASTQDLSPH) the composition is skewed to polar residues. At T498 the chain carries Phosphothreonine. At S502 the chain carries Phosphoserine.

The protein belongs to the kinesin light chain family. In terms of assembly, oligomer composed of two heavy chains and two light chains. Associates with microtubulin in an ATP-dependent manner. Interacts with KIF5C. Interacts with ODF1. Interacts with LRGUK. Interacts with VDAC2.

Its subcellular location is the cytoplasm. It is found in the cytoskeleton. It localises to the mitochondrion. Its function is as follows. Kinesin is a microtubule-associated force-producing protein that may play a role in organelle transport. Plays a role during spermiogenesis in the development of the sperm tail midpiece and in the normal function of spermatozoa. May play a role in the formation of the mitochondrial sheath formation in the developing spermatid midpiece. This Homo sapiens (Human) protein is Kinesin light chain 3 (KLC3).